Here is a 258-residue protein sequence, read N- to C-terminus: Phosphate import ATP-binding protein PstB (258 aa).

The ABC transporter domain occupies 5–247 (IDVSGLNAYY…ERIFSNPSVQ (243 aa)). 37-44 (GPSGCGKS) serves as a coordination point for ATP.

The protein belongs to the ABC transporter superfamily. Phosphate importer (TC 3.A.1.7) family. The complex is composed of two ATP-binding proteins (PstB), two transmembrane proteins (PstC and PstA) and a solute-binding protein (PstS).

The protein resides in the cell membrane. The catalysed reaction is phosphate(out) + ATP + H2O = ADP + 2 phosphate(in) + H(+). Functionally, part of the ABC transporter complex PstSACB involved in phosphate import. Responsible for energy coupling to the transport system. The chain is Phosphate import ATP-binding protein PstB from Streptomyces coelicolor (strain ATCC BAA-471 / A3(2) / M145).